The chain runs to 133 residues: Hydrogenase maturation factor HypA (133 aa).

H2 serves as a coordination point for Ni(2+). Zn(2+)-binding residues include C73, C75, C105, and C108.

Belongs to the HypA/HybF family.

Its function is as follows. Involved in the maturation of [NiFe] hydrogenases. Required for nickel insertion into the metal center of the hydrogenase. The protein is Hydrogenase maturation factor HypA of Methanosarcina barkeri (strain Fusaro / DSM 804).